Here is a 320-residue protein sequence, read N- to C-terminus: Biotin synthase (320 aa).

Positions 45-274 (NDLQKASLLS…DSRIRLSAGR (230 aa)) constitute a Radical SAM core domain. Residues cysteine 60, cysteine 64, and cysteine 67 each contribute to the [4Fe-4S] cluster site. 4 residues coordinate [2Fe-2S] cluster: cysteine 105, cysteine 137, cysteine 197, and arginine 269.

Belongs to the radical SAM superfamily. Biotin synthase family. In terms of assembly, homodimer. The cofactor is [4Fe-4S] cluster. [2Fe-2S] cluster is required as a cofactor.

The catalysed reaction is (4R,5S)-dethiobiotin + (sulfur carrier)-SH + 2 reduced [2Fe-2S]-[ferredoxin] + 2 S-adenosyl-L-methionine = (sulfur carrier)-H + biotin + 2 5'-deoxyadenosine + 2 L-methionine + 2 oxidized [2Fe-2S]-[ferredoxin]. It participates in cofactor biosynthesis; biotin biosynthesis; biotin from 7,8-diaminononanoate: step 2/2. Its function is as follows. Catalyzes the conversion of dethiobiotin (DTB) to biotin by the insertion of a sulfur atom into dethiobiotin via a radical-based mechanism. This chain is Biotin synthase, found in Beijerinckia indica subsp. indica (strain ATCC 9039 / DSM 1715 / NCIMB 8712).